A 493-amino-acid polypeptide reads, in one-letter code: 3-octaprenyl-4-hydroxybenzoate carboxy-lyase (493 aa).

Residue N172 coordinates Mn(2+). Prenylated FMN-binding positions include 175-177 (IYR), 189-191 (RWL), and 194-195 (RG). E238 provides a ligand contact to Mn(2+). Residue D287 is the Proton donor of the active site.

The protein belongs to the UbiD family. Homohexamer. Prenylated FMN is required as a cofactor. Mn(2+) serves as cofactor.

Its subcellular location is the cell membrane. It carries out the reaction a 4-hydroxy-3-(all-trans-polyprenyl)benzoate + H(+) = a 2-(all-trans-polyprenyl)phenol + CO2. The protein operates within cofactor biosynthesis; ubiquinone biosynthesis. Catalyzes the decarboxylation of 3-octaprenyl-4-hydroxy benzoate to 2-octaprenylphenol, an intermediate step in ubiquinone biosynthesis. This is 3-octaprenyl-4-hydroxybenzoate carboxy-lyase from Shewanella piezotolerans (strain WP3 / JCM 13877).